A 417-amino-acid polypeptide reads, in one-letter code: Probable uracil permease (417 aa).

Over 1 to 13 the chain is Cytoplasmic; sequence MTNQNPPVLLEQN. A helical transmembrane segment spans residues 14-37; it reads HAKQAFVGLQMLFVAFGALVLVPL. The Periplasmic portion of the chain corresponds to 38–41; sequence ITGL. The chain crosses the membrane as a helical span at residues 42-61; it reads NANTALLTAGIGTLLFQLCT. Residues 62-64 lie on the Cytoplasmic side of the membrane; the sequence is GRQ. The chain crosses the membrane as a discontinuously helical span at residues 65–81; the sequence is VPIFLASSFAFIAPIQY. Phe-73 contributes to the uracil binding site. At 83–90 the chain is on the periplasmic side; that stretch reads VTTWGIAT. The chain crosses the membrane as a helical span at residues 91 to 111; sequence TMGGLVFTGLVYFALSTLVKI. Residues 112 to 123 lie on the Cytoplasmic side of the membrane; the sequence is KGAGALQKVFPP. A helical transmembrane segment spans residues 124-145; sequence VVVGPVIIIIGMGLAPVAVDMA. The Periplasmic portion of the chain corresponds to 146–154; it reads LGKNSTYQY. The chain crosses the membrane as a helical span at residues 155–170; sequence NDAVFVSMATLLTTLG. At 171-177 the chain is on the cytoplasmic side; it reads VAVFAKG. Residues 178–198 traverse the membrane as a helical segment; sequence MMKLIPIMFGIVVGYILCLFL. Over 199-223 the chain is Periplasmic; the sequence is GLINFQPVIDAPWFSVPEITTPEFK. Residues 224–247 traverse the membrane as a helical segment; it reads LEAILYLLPIAIAPAVEHVGGIMA. Residue Glu-240 participates in uracil binding. Residues 248 to 260 are Cytoplasmic-facing; the sequence is ISSVTGKDFLQKP. The chain crosses the membrane as a helical span at residues 261-280; sequence GLHRTLLGDGIATSAASFLG. A discontinuously helical transmembrane segment spans residues 281-297; sequence GPPNTTYAEVTGAVMLT. Position 289 (Glu-289) interacts with uracil. At 298–300 the chain is on the cytoplasmic side; sequence RNF. The chain crosses the membrane as a helical span at residues 301–318; it reads NPKIMTWAAVWAIAISFC. At 319–331 the chain is on the periplasmic side; sequence GKVGAFLSTIPTI. A helical membrane pass occupies residues 332 to 353; that stretch reads VMGGIMMLVFGSIAVVGMSTLI. Residues 354-364 are Cytoplasmic-facing; the sequence is RGKVDVTEARN. Residues 365–400 constitute an intramembrane region (discontinuously helical); sequence LCIISVVMTFGIGGMFVNFGEVSLKGISLCAVVAIL. At 401–416 the chain is on the cytoplasmic side; the sequence is LNLILPKAKNTPIEEN.

Belongs to the nucleobase:cation symporter-2 (NCS2) (TC 2.A.40) family.

The protein localises to the cell inner membrane. It carries out the reaction uracil(in) + H(+)(in) = uracil(out) + H(+)(out). Transport of uracil in the cell. The sequence is that of Probable uracil permease (uraA) from Pasteurella multocida (strain Pm70).